Here is a 396-residue protein sequence, read N- to C-terminus: Alanine racemase (396 aa).

Lys-46 serves as the catalytic Proton acceptor; specific for D-alanine. An N6-(pyridoxal phosphate)lysine modification is found at Lys-46. Arg-145 lines the substrate pocket. Residue Tyr-280 is the Proton acceptor; specific for L-alanine of the active site. Met-328 is a binding site for substrate.

This sequence belongs to the alanine racemase family. Pyridoxal 5'-phosphate serves as cofactor.

It catalyses the reaction L-alanine = D-alanine. It participates in amino-acid biosynthesis; D-alanine biosynthesis; D-alanine from L-alanine: step 1/1. Catalyzes the interconversion of L-alanine and D-alanine. May also act on other amino acids. In Brucella ovis (strain ATCC 25840 / 63/290 / NCTC 10512), this protein is Alanine racemase (alr).